The following is a 283-amino-acid chain: ATP phosphoribosyltransferase (283 aa).

It belongs to the ATP phosphoribosyltransferase family. Long subfamily. It depends on Mg(2+) as a cofactor.

Its subcellular location is the cytoplasm. It catalyses the reaction 1-(5-phospho-beta-D-ribosyl)-ATP + diphosphate = 5-phospho-alpha-D-ribose 1-diphosphate + ATP. It functions in the pathway amino-acid biosynthesis; L-histidine biosynthesis; L-histidine from 5-phospho-alpha-D-ribose 1-diphosphate: step 1/9. With respect to regulation, feedback inhibited by histidine. Functionally, catalyzes the condensation of ATP and 5-phosphoribose 1-diphosphate to form N'-(5'-phosphoribosyl)-ATP (PR-ATP). Has a crucial role in the pathway because the rate of histidine biosynthesis seems to be controlled primarily by regulation of HisG enzymatic activity. This chain is ATP phosphoribosyltransferase, found in Rhodococcus jostii (strain RHA1).